The sequence spans 127 residues: Protein NEGATIVE REGULATOR OF RESISTANCE (127 aa).

Disordered stretches follow at residues 1 to 28 and 47 to 127; these read MDAT…VDEV and TRRL…RAPA. Residues 112-127 are compositionally biased toward low complexity; that stretch reads PPSDAPATPRSARAPA.

This sequence belongs to the NPR1-interactor family. Interacts with NPR1/NH1. Interacts with NPR3/NH3.

The protein localises to the nucleus. In terms of biological role, acts as a negative regulator of disease resistance. Acts on basal resistance, age-related resistance and resistance mediated by the LRR receptor kinase XA21. Plants over-expressing NRR display enhanced susceptibility to the bacterial blight Xanthomonas oryzae pv. oryzae (Xoo). Binds to and represses NPR1/NH1-mediated transcriptional activation of LG2 in vitro. This chain is Protein NEGATIVE REGULATOR OF RESISTANCE, found in Oryza sativa subsp. japonica (Rice).